The following is a 236-amino-acid chain: MSNLDTQSIINTISNSKKQTPVRVFIAGEKLYQLQIPNEIEAFISPTSGTLFGEWKYVKALLESSSQITHYRVENDSRNSAVPLLDKKEVNARIEPGAIIRDQVLIGNNAVIMMGAIINIGAEIGAETMIDMGVVLGGRALVGRHCHIGAGAVLAGVIEPASAQPVQIDDHVLIGANAVVVEGVHVGTGAVVAAGAVVTKDVPAHTVVAGVPAQIIKRVDNTTSQKTALEDGLRNL.

This sequence belongs to the transferase hexapeptide repeat family. DapH subfamily.

It carries out the reaction (S)-2,3,4,5-tetrahydrodipicolinate + acetyl-CoA + H2O = L-2-acetamido-6-oxoheptanedioate + CoA. It functions in the pathway amino-acid biosynthesis; L-lysine biosynthesis via DAP pathway; LL-2,6-diaminopimelate from (S)-tetrahydrodipicolinate (acetylase route): step 1/3. Functionally, catalyzes the transfer of an acetyl group from acetyl-CoA to tetrahydrodipicolinate. The sequence is that of 2,3,4,5-tetrahydropyridine-2,6-dicarboxylate N-acetyltransferase from Pediococcus pentosaceus (strain ATCC 25745 / CCUG 21536 / LMG 10740 / 183-1w).